The primary structure comprises 295 residues: Voltage-gated potassium channel (295 aa).

At 1-38 (MSVERWVFPGCSVMARFRRGLSDLGGRVRNIGDVMEHP) the chain is on the cytoplasmic side. Residues 39–63 (LVELGVSYAALLSVIVVVVEYTMQL) traverse the membrane as a helical segment. Topologically, residues 64 to 67 (SGEY) are extracellular. Residues 68–92 (LVRLYLVDLILVIILWADYAYRAYK) form a helical membrane-spanning segment. Over 93–96 (SGDP) the chain is Cytoplasmic. The helical intramembrane region spans 97 to 105 (AGYVKKTLY). At 106–108 (EIP) the chain is on the extracellular side. The helical; Voltage-sensor transmembrane segment at 109–125 (ALVPAGLLALIEGHLAG) threads the bilayer. The Cytoplasmic segment spans residues 126–128 (LGL). The chain crosses the membrane as a helical; Voltage-sensor span at residues 129-145 (FRLVRLLRFLRILLIIS). Over 146–159 (RGSKFLSAIADAAD) the chain is Cytoplasmic. A helical transmembrane segment spans residues 160–184 (KIRFYHLFGAVMLTVLYGAFAIYIV). The Extracellular portion of the chain corresponds to 185-195 (EYPDPNSSIKS). An intramembrane region (pore-forming) is located at residues 196 to 208 (VFDALWWAVVTAT). Positions 209–214 (TVGYGD) match the Selectivity filter motif. Residues 209-221 (TVGYGDVVPATPI) are Extracellular-facing. A helical transmembrane segment spans residues 222–253 (GKVIGIAVMLTGISALTLLIGTVSNMFQKILV). The Cytoplasmic portion of the chain corresponds to 254 to 295 (GEPEPSCSPAKLAEMVSSMSEEEFEEFVRTLKNLRRLENSMK).

It belongs to the potassium channel family.

The protein resides in the cell membrane. Mediates a strong voltage-dependent potassium ion permeability of excitable membranes. Assuming opened or closed conformations in response to the voltage difference across the membrane, the protein forms a potassium-selective channel through which potassium ions may pass in accordance with their electrochemical gradient. The polypeptide is Voltage-gated potassium channel (Aeropyrum pernix (strain ATCC 700893 / DSM 11879 / JCM 9820 / NBRC 100138 / K1)).